Here is a 449-residue protein sequence, read N- to C-terminus: Guanine/hypoxanthine permease GhxP (449 aa).

Residues 1-25 are Cytoplasmic-facing; sequence MSTPSARTGGSLDAWFKISQRGSTV. The chain crosses the membrane as a helical span at residues 26 to 49; the sequence is RQEVVAGLTTFLAMVYSVIVVPGM. The Periplasmic portion of the chain corresponds to 50–59; the sequence is LGKAGFPPAA. The chain crosses the membrane as a helical span at residues 60–78; that stretch reads VFVATCLVAGLGSIVMGLW. Topologically, residues 79–80 are cytoplasmic; it reads AN. Residues 81 to 97 traverse the membrane as a discontinuously helical segment; sequence LPLAIGCAISLTAFTAF. Residues 98–109 are Periplasmic-facing; sequence SLVLGQHISVPV. The chain crosses the membrane as a helical span at residues 110 to 129; that stretch reads ALGAVFLMGVLFTVISATGI. Over 130–141 the chain is Cytoplasmic; that stretch reads RSWILRNLPHGV. The helical transmembrane segment at 142-162 threads the bilayer; that stretch reads AHGTGIGIGLFLLLIAANGVG. Residues 163-180 lie on the Periplasmic side of the membrane; it reads LVIKNPLDGLPVALGDFA. Residues 181-198 form a helical membrane-spanning segment; that stretch reads TFPVIMSLVGLAVIIGLE. At 199-202 the chain is on the cytoplasmic side; sequence KLKV. A helical transmembrane segment spans residues 203–222; it reads PGGILLTIIGISIVGLIFDP. Residues 223 to 254 are Periplasmic-facing; that stretch reads NVHFSGVFAMPSLSDENGNSLIGSLDIMGALN. The helical transmembrane segment at 255 to 283 threads the bilayer; that stretch reads PVVLPSVLALVMTAVFDATGTIRAVAGQA. Residues 284–296 are Cytoplasmic-facing; the sequence is NLLDKDGQIIDGG. Residues 297–312 traverse the membrane as a helical segment; sequence KALTTDSMSSVFSGLV. At 313 to 314 the chain is on the periplasmic side; sequence GA. A discontinuously helical membrane pass occupies residues 315–330; sequence APAAVYIESAAGTAAG. Over 331-334 the chain is Cytoplasmic; sequence GKTG. The helical transmembrane segment at 335-349 threads the bilayer; it reads LTAITVGVLFLLILF. Over 350 to 360 the chain is Periplasmic; sequence LSPLSYLVPGY. A helical membrane pass occupies residues 361–380; that stretch reads ATAPALMYVGLLMLSNVAKI. The Cytoplasmic segment spans residues 381–385; the sequence is DFADF. The discontinuously helical intramembrane region spans 386–421; the sequence is VDAMAGLVTAVFIVLTCNIVTGIMIGFATLVIGRLV. Residues 422–449 lie on the Cytoplasmic side of the membrane; that stretch reads SGEWRKLNIGTVVIAVALVTFYAGGWAI.

This sequence belongs to the nucleobase:cation symporter-2 (NCS2) (TC 2.A.40) family. Azg-like subfamily.

It localises to the cell inner membrane. Functionally, high-affinity transporter for guanine and hypoxanthine. The sequence is that of Guanine/hypoxanthine permease GhxP (ghxP) from Escherichia coli O157:H7.